The chain runs to 301 residues: Pyridoxal 5'-phosphate synthase subunit PdxS (301 aa).

Residue Asp-31 coordinates D-ribose 5-phosphate. Lys-88 (schiff-base intermediate with D-ribose 5-phosphate) is an active-site residue. Gly-160 contributes to the D-ribose 5-phosphate binding site. Residue Lys-172 participates in D-glyceraldehyde 3-phosphate binding. Residues Gly-221 and 242 to 243 (GS) each bind D-ribose 5-phosphate.

This sequence belongs to the PdxS/SNZ family. In the presence of PdxT, forms a dodecamer of heterodimers.

The catalysed reaction is aldehydo-D-ribose 5-phosphate + D-glyceraldehyde 3-phosphate + L-glutamine = pyridoxal 5'-phosphate + L-glutamate + phosphate + 3 H2O + H(+). It participates in cofactor biosynthesis; pyridoxal 5'-phosphate biosynthesis. Functionally, catalyzes the formation of pyridoxal 5'-phosphate from ribose 5-phosphate (RBP), glyceraldehyde 3-phosphate (G3P) and ammonia. The ammonia is provided by the PdxT subunit. Can also use ribulose 5-phosphate and dihydroxyacetone phosphate as substrates, resulting from enzyme-catalyzed isomerization of RBP and G3P, respectively. This is Pyridoxal 5'-phosphate synthase subunit PdxS from Methanosarcina acetivorans (strain ATCC 35395 / DSM 2834 / JCM 12185 / C2A).